Consider the following 500-residue polypeptide: L-arabinose isomerase (500 aa).

Residues Glu306, Glu333, His350, and His450 each contribute to the Mn(2+) site.

It belongs to the arabinose isomerase family. As to quaternary structure, homohexamer. Mn(2+) is required as a cofactor.

The enzyme catalyses beta-L-arabinopyranose = L-ribulose. Its pathway is carbohydrate degradation; L-arabinose degradation via L-ribulose; D-xylulose 5-phosphate from L-arabinose (bacterial route): step 1/3. Catalyzes the conversion of L-arabinose to L-ribulose. The sequence is that of L-arabinose isomerase from Escherichia coli O157:H7.